A 542-amino-acid chain; its full sequence is Chaperonin GroEL (542 aa).

Residues 29–32 (TLGP), K50, 86–90 (DGTTT), G415, and D495 contribute to the ATP site.

The protein belongs to the chaperonin (HSP60) family. Forms a cylinder of 14 subunits composed of two heptameric rings stacked back-to-back. Interacts with the co-chaperonin GroES.

The protein resides in the cytoplasm. The catalysed reaction is ATP + H2O + a folded polypeptide = ADP + phosphate + an unfolded polypeptide.. Together with its co-chaperonin GroES, plays an essential role in assisting protein folding. The GroEL-GroES system forms a nano-cage that allows encapsulation of the non-native substrate proteins and provides a physical environment optimized to promote and accelerate protein folding. The chain is Chaperonin GroEL from Azobacteroides pseudotrichonymphae genomovar. CFP2.